The chain runs to 439 residues: Histidinol dehydrogenase (439 aa).

Positions 129, 193, and 222 each coordinate NAD(+). Substrate is bound by residues T245, Q267, and H270. Zn(2+) contacts are provided by Q267 and H270. Active-site proton acceptor residues include E336 and H337. Substrate is bound by residues H337, D370, E424, and H429. Zn(2+) is bound at residue D370. H429 contributes to the Zn(2+) binding site.

The protein belongs to the histidinol dehydrogenase family. Requires Zn(2+) as cofactor.

It catalyses the reaction L-histidinol + 2 NAD(+) + H2O = L-histidine + 2 NADH + 3 H(+). Its pathway is amino-acid biosynthesis; L-histidine biosynthesis; L-histidine from 5-phospho-alpha-D-ribose 1-diphosphate: step 9/9. In terms of biological role, catalyzes the sequential NAD-dependent oxidations of L-histidinol to L-histidinaldehyde and then to L-histidine. The polypeptide is Histidinol dehydrogenase (Cutibacterium acnes (strain DSM 16379 / KPA171202) (Propionibacterium acnes)).